Here is a 229-residue protein sequence, read N- to C-terminus: MRIAGAIKFVVAVALFLLTFYVISQVFEIKSYTNLGNIFVRSAIDTVAHPTTKAPRYRCGISKVCPEKHFAFKIASGAANVVGPKICVDDNILMSGVKNNVGRGINTALVNGKTGALIETTYHDLWGGEVGPFIEFLKKIPDGTIVLMATYDDGATKLNDDARKRISELGSTLINVLAFRDNWVFVGGKGIKTKSPFEQHIKNNKDTNKYEGWPEVVEMEGCIPQKLNE.

An N-terminal signal peptide occupies residues 1 to 24 (MRIAGAIKFVVAVALFLLTFYVIS). 2 cysteine pairs are disulfide-bonded: Cys-59-Cys-87 and Cys-65-Cys-222. Residues 68 to 226 (KHFAFKIASG…VEMEGCIPQK (159 aa)) form the GG-type lectin domain.

The protein belongs to the FAM3 family. Expressed in the retinal ganglion cell layer.

It is found in the secreted. Its function is as follows. Involved in retinal laminar formation. The polypeptide is Protein FAM3C (fam3c) (Xenopus laevis (African clawed frog)).